The primary structure comprises 250 residues: Adenosylcobinamide-GDP ribazoletransferase (250 aa).

A run of 6 helical transmembrane segments spans residues isoleucine 31 to valine 51, phenylalanine 55 to alanine 75, valine 106 to asparagine 126, isoleucine 133 to cysteine 153, isoleucine 187 to isoleucine 207, and asparagine 230 to leucine 250.

Belongs to the CobS family. Mg(2+) serves as cofactor.

The protein resides in the cell membrane. The enzyme catalyses alpha-ribazole + adenosylcob(III)inamide-GDP = adenosylcob(III)alamin + GMP + H(+). The catalysed reaction is alpha-ribazole 5'-phosphate + adenosylcob(III)inamide-GDP = adenosylcob(III)alamin 5'-phosphate + GMP + H(+). Its pathway is cofactor biosynthesis; adenosylcobalamin biosynthesis; adenosylcobalamin from cob(II)yrinate a,c-diamide: step 7/7. Functionally, joins adenosylcobinamide-GDP and alpha-ribazole to generate adenosylcobalamin (Ado-cobalamin). Also synthesizes adenosylcobalamin 5'-phosphate from adenosylcobinamide-GDP and alpha-ribazole 5'-phosphate. This chain is Adenosylcobinamide-GDP ribazoletransferase, found in Clostridium novyi (strain NT).